Reading from the N-terminus, the 214-residue chain is tRNA (guanine-N(7)-)-methyltransferase (214 aa).

S-adenosyl-L-methionine is bound by residues Glu44, Asp69, Asp96, and Asp118. Residue Asp118 is part of the active site. A substrate-binding site is contributed by Lys122. The segment at 124–129 (KHEKRR) is interaction with RNA. Residues Asp154 and 191–194 (TEYE) each bind substrate.

This sequence belongs to the class I-like SAM-binding methyltransferase superfamily. TrmB family.

The catalysed reaction is guanosine(46) in tRNA + S-adenosyl-L-methionine = N(7)-methylguanosine(46) in tRNA + S-adenosyl-L-homocysteine. It functions in the pathway tRNA modification; N(7)-methylguanine-tRNA biosynthesis. In terms of biological role, catalyzes the formation of N(7)-methylguanine at position 46 (m7G46) in tRNA. This chain is tRNA (guanine-N(7)-)-methyltransferase, found in Enterococcus faecalis (strain ATCC 700802 / V583).